Consider the following 454-residue polypeptide: UPF0210 protein Mlab_1030 (454 aa).

This sequence belongs to the UPF0210 family.

The chain is UPF0210 protein Mlab_1030 from Methanocorpusculum labreanum (strain ATCC 43576 / DSM 4855 / Z).